The chain runs to 150 residues: UPF0178 protein AHA_0543 (150 aa).

The protein belongs to the UPF0178 family.

This is UPF0178 protein AHA_0543 from Aeromonas hydrophila subsp. hydrophila (strain ATCC 7966 / DSM 30187 / BCRC 13018 / CCUG 14551 / JCM 1027 / KCTC 2358 / NCIMB 9240 / NCTC 8049).